The chain runs to 515 residues: Pre-glycoprotein polyprotein GP complex (515 aa).

The N-myristoyl glycine; by host moiety is linked to residue glycine 2. Over 2–17 the chain is Extracellular; the sequence is GQVIGFFQSLPEIINE. A helical transmembrane segment spans residues 18 to 33; the sequence is ALNIALICVALLATIK. Residues 34 to 58 lie on the Cytoplasmic side of the membrane; that stretch reads GMVNIWKSGLIQLLFFLTLAGRSCS. Zn(2+) is bound at residue cysteine 57. The Extracellular segment spans residues 59-453; it reads HSFTIGRFHE…QGRTPLSLVD (395 aa). 4 disulfides stabilise this stretch: cysteine 87–cysteine 255, cysteine 300–cysteine 313, cysteine 322–cysteine 331, and cysteine 385–cysteine 406. N-linked (GlcNAc...) asparagine; by host glycosylation is found at asparagine 90, asparagine 112, asparagine 127, asparagine 180, and asparagine 248. Residues asparagine 386, asparagine 394, and asparagine 416 are each glycosylated (N-linked (GlcNAc...) asparagine; by host). Residues 454-474 form a helical membrane-spanning segment; it reads LCFWSTLFYISTLFAHLVGFP. Residues 475 to 515 lie on the Cytoplasmic side of the membrane; that stretch reads THRHLIGEGCPKPHRLTGSGICSCGHYGIPGKPVRWTKMSR. Residues histidine 476, histidine 478, cysteine 484, histidine 488, cysteine 496, and cysteine 498 each coordinate Zn(2+).

This sequence belongs to the arenaviridae GPC protein family. Interacts with glycoprotein G2. Part of the GP complex (GP-C) together with glycoprotein G1 and glycoprotein G2. The GP-complex interacts with protein Z, which interacts with ribonucleocapsid; these interactions may induce virion budding. In terms of assembly, homotrimer; disulfide-linked. In pre-fusion state, G1 homotrimers bind G2 homotrimers via ionic interactions. Part of the GP complex (GP-C) together with glycoprotein G2 and the stable signal peptide. The GP-complex interacts with protein Z, which interacts with ribonucleocapsid; these interactions may induce virion budding. As to quaternary structure, homotrimer. Interacts with the stable signal peptide. In pre-fusion state, G2 homotrimers bind G1 homotrimers via ionic interactions. Part of the GP complex (GP-C) together with glycoprotein G1 and the stable signal peptide. Acidification in the endosome triggers rearrangements, which ultimately leads to a 6 helix bundle formed by the two heptad repeat domains (HR1 and HR2) in post-fusion state. The GP-complex interacts with protein Z, which interacts with ribonucleocapsid; these interactions may induce virion budding. Specific enzymatic cleavages in vivo yield mature proteins. GP-C polyprotein is cleaved in the endoplasmic reticulum by the host protease MBTPS1. Only cleaved glycoprotein is incorporated into virions. In terms of processing, the SSP remains stably associated with the GP complex following cleavage by signal peptidase and plays crucial roles in the trafficking of GP through the secretory pathway. Post-translationally, myristoylation is necessary for GP2-mediated fusion activity.

It is found in the virion membrane. Its subcellular location is the host endoplasmic reticulum membrane. The protein resides in the host Golgi apparatus membrane. It localises to the host cell membrane. In terms of biological role, functions as a cleaved signal peptide that is retained as the third component of the GP complex (GP-C). Helps to stabilize the spike complex in its native conformation. The SSP is required for efficient glycoprotein expression, post-translational maturation cleavage of G1 and G2, glycoprotein transport to the cell surface plasma membrane, formation of infectious virus particles, and acid pH-dependent glycoprotein-mediated cell fusion. Its function is as follows. Forms the virion spikes together with glycoprotein G2. The glycoprotein spike trimers are connected to the underlying matrix. Mediates virus attachment to host receptor alpha-dystroglycan DAG1. This attachment induces virion internalization predominantly through clathrin- and caveolin-independent endocytosis. Functionally, forms the virion spikes together with glycoprotein G1. The glycoprotein spike trimers are connected to the underlying matrix. Class I viral fusion protein that directs fusion of viral and host endosomal membranes, leading to delivery of the nucleocapsid into the cytoplasm. Membrane fusion is mediated by irreversible conformational changes induced by acidification. This Latino mammarenavirus (isolate Rat/Bolivia/MARU 1924/1965) (LATV) protein is Pre-glycoprotein polyprotein GP complex.